The primary structure comprises 579 residues: Mitochondrial distribution and morphology protein 31 (579 aa).

A mitochondrion-targeting transit peptide spans M1–S47. The Mitochondrial matrix portion of the chain corresponds to N48–W114. Residues I115–L135 traverse the membrane as a helical segment. The Mitochondrial intermembrane portion of the chain corresponds to Y136–R558. The helical transmembrane segment at V559–I578 threads the bilayer. Position 579 (A579) is a topological domain, mitochondrial matrix.

This sequence belongs to the MDM31/MDM32 family. As to quaternary structure, interacts with MDM32. Participates in a complex of about 600 kDa.

The protein localises to the mitochondrion inner membrane. Its function is as follows. Involved in the organization of the mitochondrial membranes and the global structure of the mitochondria. Also required for mitochondrial distribution and mobility as well as for the maintenance of mitochondrial DNA nucleoids structures. This chain is Mitochondrial distribution and morphology protein 31 (MDM31), found in Saccharomyces cerevisiae (strain ATCC 204508 / S288c) (Baker's yeast).